The sequence spans 315 residues: Manganese-dependent 2,3-dihydroxybiphenyl 1,2-dioxygenase (315 aa).

2 consecutive VOC domains span residues lysine 7 to aspartate 121 and arginine 150 to glycine 273. Positions 153, 216, and 269 each coordinate Mn(2+).

It belongs to the extradiol ring-cleavage dioxygenase family. In terms of assembly, homotetramer. It depends on Mn(2+) as a cofactor.

It catalyses the reaction biphenyl-2,3-diol + O2 = 2-hydroxy-6-oxo-6-phenylhexa-2,4-dienoate + H(+). It functions in the pathway xenobiotic degradation; biphenyl degradation; 2-hydroxy-2,4-pentadienoate and benzoate from biphenyl: step 3/4. Functionally, catalyzes the meta-cleavage of the hydroxylated biphenyl ring. The enzyme can oxidize a wide range of substrates, and the substrate preference order is 2,3-dihydroxybiphenyl &gt; 3-methylcatechol &gt; catechol &gt; 4-methylcatechol &gt; 4-chlorocatechol. The polypeptide is Manganese-dependent 2,3-dihydroxybiphenyl 1,2-dioxygenase (bphC) (Geobacillus genomosp. 3).